The following is a 305-amino-acid chain: UDP-3-O-acyl-N-acetylglucosamine deacetylase (305 aa).

His79, His238, and Asp242 together coordinate Zn(2+). His265 functions as the Proton donor in the catalytic mechanism.

Belongs to the LpxC family. Zn(2+) serves as cofactor.

It carries out the reaction a UDP-3-O-[(3R)-3-hydroxyacyl]-N-acetyl-alpha-D-glucosamine + H2O = a UDP-3-O-[(3R)-3-hydroxyacyl]-alpha-D-glucosamine + acetate. The protein operates within glycolipid biosynthesis; lipid IV(A) biosynthesis; lipid IV(A) from (3R)-3-hydroxytetradecanoyl-[acyl-carrier-protein] and UDP-N-acetyl-alpha-D-glucosamine: step 2/6. Functionally, catalyzes the hydrolysis of UDP-3-O-myristoyl-N-acetylglucosamine to form UDP-3-O-myristoylglucosamine and acetate, the committed step in lipid A biosynthesis. The polypeptide is UDP-3-O-acyl-N-acetylglucosamine deacetylase (Proteus mirabilis (strain HI4320)).